The sequence spans 384 residues: 8-amino-7-oxononanoate synthase (384 aa).

Position 21 (Arg-21) interacts with substrate. 108–109 (GF) lines the pyridoxal 5'-phosphate pocket. His-133 contributes to the substrate binding site. Pyridoxal 5'-phosphate is bound by residues Ser-179, His-207, and Thr-233. Lys-236 carries the post-translational modification N6-(pyridoxal phosphate)lysine. Thr-352 contacts substrate.

It belongs to the class-II pyridoxal-phosphate-dependent aminotransferase family. BioF subfamily. As to quaternary structure, homodimer. Pyridoxal 5'-phosphate is required as a cofactor.

The enzyme catalyses 6-carboxyhexanoyl-[ACP] + L-alanine + H(+) = (8S)-8-amino-7-oxononanoate + holo-[ACP] + CO2. It participates in cofactor biosynthesis; biotin biosynthesis. Catalyzes the decarboxylative condensation of pimeloyl-[acyl-carrier protein] and L-alanine to produce 8-amino-7-oxononanoate (AON), [acyl-carrier protein], and carbon dioxide. This chain is 8-amino-7-oxononanoate synthase, found in Escherichia coli (strain UTI89 / UPEC).